The primary structure comprises 398 residues: MSKIIDEILSSLSRSRIFRNRELLLPDYVPEELPHREEQIKRLVEILSPLMRGEKPNNIFIYGLTGTGKTAVTKFVVKKLHEKISNSFIYVYINTRQTDTPYRILADLLENLGSKVPFTGISTAELYRRFIKKVLELKPILVIVLDEIDALVKKHGDDILYRLTRANYEMGKSKVSIIGITNDIKFVEFLDPRVKSSLSEEEIVFPPYNAEELEDILKRRATLAFYDSVVSDDVIKLCAAIAARDHGDARRALDLLRVAGEVAERDGAEKLTIEHVNKARVEIERDRVYEVVSTLPFHSKLVLLAIVIGVNEKRRTLTTGEVYDVYTKLAKKIGVESVTQRRVSDIINELDMLGIITARVVNRGRYGKTKEVNLAVNEETVIKAISEKDSKIASLWDR.

ATP-binding positions include 67–71 (TGKTA), Tyr-208, and Arg-220.

This sequence belongs to the CDC6/cdc18 family.

Functionally, involved in regulation of DNA replication. This chain is ORC1-type DNA replication protein 1 (cdc6-1), found in Sulfurisphaera tokodaii (strain DSM 16993 / JCM 10545 / NBRC 100140 / 7) (Sulfolobus tokodaii).